The sequence spans 67 residues: Protein AaeX (67 aa).

2 helical membrane-spanning segments follow: residues 10 to 30 (FGLSFPPVFFVLLVSLTLFFV) and 43 to 63 (FVWHPALFNSALFCCLFYLLF).

It belongs to the AaeX family.

The protein resides in the cell membrane. The protein is Protein AaeX of Pectobacterium carotovorum subsp. carotovorum (strain PC1).